The chain runs to 437 residues: tRNA-2-methylthio-N(6)-dimethylallyladenosine synthase (437 aa).

Positions 1–115 (MKVYIETMGC…ISQVIHKEKA (115 aa)) constitute an MTTase N-terminal domain. The [4Fe-4S] cluster site is built by Cys10, Cys46, Cys78, Cys148, Cys152, and Cys155. The 234-residue stretch at 134–367 (KKAQIRSLLN…QNRHKEILEE (234 aa)) folds into the Radical SAM core domain. Residues 370–436 (KLEVGKTHVV…KGRLIAAIKG (67 aa)) enclose the TRAM domain.

This sequence belongs to the methylthiotransferase family. MiaB subfamily. Monomer. It depends on [4Fe-4S] cluster as a cofactor.

The protein localises to the cytoplasm. It carries out the reaction N(6)-dimethylallyladenosine(37) in tRNA + (sulfur carrier)-SH + AH2 + 2 S-adenosyl-L-methionine = 2-methylsulfanyl-N(6)-dimethylallyladenosine(37) in tRNA + (sulfur carrier)-H + 5'-deoxyadenosine + L-methionine + A + S-adenosyl-L-homocysteine + 2 H(+). Functionally, catalyzes the methylthiolation of N6-(dimethylallyl)adenosine (i(6)A), leading to the formation of 2-methylthio-N6-(dimethylallyl)adenosine (ms(2)i(6)A) at position 37 in tRNAs that read codons beginning with uridine. This Helicobacter pylori (strain P12) protein is tRNA-2-methylthio-N(6)-dimethylallyladenosine synthase.